Reading from the N-terminus, the 536-residue chain is MDNIERLYKCYEILSEAGDKISEHVDEYKEILKAVKGTSKEKRLASQFIGNFFKHFPDLADTAIDAQFDLCEDDDTQIRRQAIKDLPKLCQGNADATIRVGDTLAQLLILDDPTELQQVNNSLLAIIKLDTKSSIAGLFQQISTGDETTRERCLKFIATKLLTMGPTVITKEIEDYIVEEIKKALQDVTADEFHLCMTILGATKLGSTITGHAELVKLATEQAELNNTDADIIAVDDEVVERFIQCASAAAPYFSKTIKSTAFVAHVCDKLLPIKTWNMIATAVSQDQIQLRLLKVFAEMITNTDKLDNASERINAVYNVLLEYMPLPKLSDEDLGDTPPSFQFSHAECLLYALHTLGKNHPNSLSFVEDAEKLKDFRARLQYLARGTQGYIKKLEESLKGKTGEELKTEENQLKQTALKTTSNINILIRDLFHSPPIFKHDIVLSWIVPKNNKLGKRHAPITFGEKAAANGKDKDQEPEKKSRPSNDQKFYSPPSGKYSNKVNQSYGNNNRTRQRGGGGGGGSGGGYRNRRFNKY.

Residues 462 to 536 (ITFGEKAAAN…GYRNRRFNKY (75 aa)) are disordered. Basic and acidic residues predominate over residues 472–487 (GKDKDQEPEKKSRPSN). Residues 498 to 507 (KYSNKVNQSY) show a composition bias toward polar residues. Positions 516 to 528 (RGGGGGGGSGGGY) are enriched in gly residues.

It belongs to the API5 family.

It localises to the nucleus. Functionally, antiapoptotic factor. Also known to efficiently suppress E2F1-induced apoptosis. This Drosophila melanogaster (Fruit fly) protein is Apoptosis inhibitor 5 homolog.